A 371-amino-acid chain; its full sequence is uncharacterized protein (371 aa).

It belongs to the Gfo/Idh/MocA family.

This is an uncharacterized protein from Synechocystis sp. (strain ATCC 27184 / PCC 6803 / Kazusa).